Reading from the N-terminus, the 130-residue chain is Spore coat protein M (130 aa).

Functionally, involved in spore outer coat assembly. May be part of a cross-linked insoluble skeleton that surrounds the spore, serves as a matrix for the assembly of additional outer coat material, and confers structural stability to the final structure. This chain is Spore coat protein M (cotM), found in Bacillus subtilis (strain 168).